Consider the following 938-residue polypeptide: Isoleucine--tRNA ligase (938 aa).

Positions 58-68 match the 'HIGH' region motif; sequence PYANGSIHIGH. Lysine 183 carries the post-translational modification N6-acetyllysine. Glutamate 561 is a binding site for L-isoleucyl-5'-AMP. Positions 602-606 match the 'KMSKS' region motif; that stretch reads KMSKS. Lysine 605 serves as a coordination point for ATP. Zn(2+)-binding residues include cysteine 901, cysteine 904, cysteine 921, and cysteine 924.

This sequence belongs to the class-I aminoacyl-tRNA synthetase family. IleS type 1 subfamily. Monomer. Requires Zn(2+) as cofactor.

The protein resides in the cytoplasm. It catalyses the reaction tRNA(Ile) + L-isoleucine + ATP = L-isoleucyl-tRNA(Ile) + AMP + diphosphate. Its function is as follows. Catalyzes the attachment of isoleucine to tRNA(Ile). As IleRS can inadvertently accommodate and process structurally similar amino acids such as valine, to avoid such errors it has two additional distinct tRNA(Ile)-dependent editing activities. One activity is designated as 'pretransfer' editing and involves the hydrolysis of activated Val-AMP. The other activity is designated 'posttransfer' editing and involves deacylation of mischarged Val-tRNA(Ile). The chain is Isoleucine--tRNA ligase from Escherichia fergusonii (strain ATCC 35469 / DSM 13698 / CCUG 18766 / IAM 14443 / JCM 21226 / LMG 7866 / NBRC 102419 / NCTC 12128 / CDC 0568-73).